Here is a 347-residue protein sequence, read N- to C-terminus: GMP reductase (347 aa).

108–131 (ADFAKTAQILALNPALNFVCIDVA) lines the NADP(+) pocket. K(+)-binding residues include Gly181 and Gly183. Cys186 functions as the Thioimidate intermediate in the catalytic mechanism. NADP(+) is bound at residue 216 to 239 (IVSDGGCTMPGDVAKAFGGGADFV).

The protein belongs to the IMPDH/GMPR family. GuaC type 1 subfamily. In terms of assembly, homotetramer.

It catalyses the reaction IMP + NH4(+) + NADP(+) = GMP + NADPH + 2 H(+). Functionally, catalyzes the irreversible NADPH-dependent deamination of GMP to IMP. It functions in the conversion of nucleobase, nucleoside and nucleotide derivatives of G to A nucleotides, and in maintaining the intracellular balance of A and G nucleotides. The polypeptide is GMP reductase (Salmonella arizonae (strain ATCC BAA-731 / CDC346-86 / RSK2980)).